An 868-amino-acid polypeptide reads, in one-letter code: uncharacterized protein (868 aa).

The protein localises to the cytoplasm. The protein resides in the nucleus. This is an uncharacterized protein from Schizosaccharomyces pombe (strain 972 / ATCC 24843) (Fission yeast).